The chain runs to 333 residues: Lipoyl synthase (333 aa).

The interval 1 to 29 (MTDSAAGATEVATPATPSNKPYDATAKQK) is disordered. The [4Fe-4S] cluster site is built by Cys-80, Cys-85, Cys-91, Cys-106, Cys-110, Cys-113, and Ser-320. The region spanning 91-309 (CFGKGTATFM…EEKAYEMGFT (219 aa)) is the Radical SAM core domain.

Belongs to the radical SAM superfamily. Lipoyl synthase family. [4Fe-4S] cluster is required as a cofactor.

It is found in the cytoplasm. The enzyme catalyses [[Fe-S] cluster scaffold protein carrying a second [4Fe-4S](2+) cluster] + N(6)-octanoyl-L-lysyl-[protein] + 2 oxidized [2Fe-2S]-[ferredoxin] + 2 S-adenosyl-L-methionine + 4 H(+) = [[Fe-S] cluster scaffold protein] + N(6)-[(R)-dihydrolipoyl]-L-lysyl-[protein] + 4 Fe(3+) + 2 hydrogen sulfide + 2 5'-deoxyadenosine + 2 L-methionine + 2 reduced [2Fe-2S]-[ferredoxin]. Its pathway is protein modification; protein lipoylation via endogenous pathway; protein N(6)-(lipoyl)lysine from octanoyl-[acyl-carrier-protein]: step 2/2. Functionally, catalyzes the radical-mediated insertion of two sulfur atoms into the C-6 and C-8 positions of the octanoyl moiety bound to the lipoyl domains of lipoate-dependent enzymes, thereby converting the octanoylated domains into lipoylated derivatives. This Ralstonia pickettii (strain 12J) protein is Lipoyl synthase.